We begin with the raw amino-acid sequence, 575 residues long: MGLTSSLRFHRQNNKTFLGIFMILVLSCIPGRTNLCSNHSVSTPKELPSSNPSDIRSSLVSLDLEGYISFDDVHNVAKDFGNRYQLPPLAILHPRSVFDISSMMKHIVHLGSTSNLTVAARGHGHSLQGQALAHQGVVIKMESLRSPDIRIYKGKQPYVDVSGGEIWINILRETLKYGLSPKSWTDYLHLTVGGTLSNAGISGQAFKHGPQINNVYQLEIVTGKGEVVTCSEKRNSELFFSVLGGLGQFGIITRARISLEPAPHMVKWIRVLYSDFSAFSRDQEYLISKEKTFDYVEGFVIINRTDLLNNWRSSFSPNDSTQASRFKSDGKTLYCLEVVKYFNPEEASSMDQETGKLLSELNYIPSTLFSSEVPYIEFLDRVHIAERKLRAKGLWEVPHPWLNLLIPKSSIYQFATEVFNNILTSNNNGPILIYPVNQSKWKKHTSLITPNEDIFYLVAFLPSAVPNSSGKNDLEYLLKQNQRVMNFCAAANLNVKQYLPHYETQKEWKSHFGKRWETFAQRKQAYDPLAILAPGQRIFQKTTGKLSPIQLAKSKATGSPQRYHYASILPKPRTV.

An N-terminal signal peptide occupies residues 1-31; it reads MGLTSSLRFHRQNNKTFLGIFMILVLSCIPG. Residues Asn14, Asn38, and Asn115 are each glycosylated (N-linked (GlcNAc...) asparagine). An FAD-binding PCMH-type domain is found at 84-262; it reads YQLPPLAILH…TRARISLEPA (179 aa). FAD contacts are provided by Ala120, Gly122, and Gly124. His125 carries the post-translational modification Pros-8alpha-FAD histidine. The FAD site is built by Ser126, Gln130, Asp186, Thr191, Ser197, Ile201, and Ile252. N-linked (GlcNAc...) asparagine glycans are attached at residues Asn303, Asn318, Asn437, and Asn467. Residues Tyr498 and Gln536 each contribute to the FAD site.

Belongs to the oxygen-dependent FAD-linked oxidoreductase family. Requires FAD as cofactor. In terms of tissue distribution, expressed in shoot apexes, lateral shoot meristems, growing tissues of young flowers, and weakly at the root-hypocotyl junction.

Its subcellular location is the vacuole. It carries out the reaction N(6)-dimethylallyladenine + A + H2O = 3-methyl-2-butenal + adenine + AH2. Its function is as follows. Catalyzes the oxidation of cytokinins, a family of N(6)-substituted adenine derivatives that are plant hormones, where the substituent is an isopentenyl group. Catalyzes in vitro the oxidation of various types of cytokinin nucleotides that are known as direct products of cytokinin biosynthesis. Promotes adventitious root initiation downstream of MYC2-dependent jasmonate signaling. Cytokinin degraded by CKX1 is required for cell division in the female gametophyte by modulating the expression of cell cycle genes. The protein is Cytokinin dehydrogenase 1 (CKX1) of Arabidopsis thaliana (Mouse-ear cress).